Reading from the N-terminus, the 638-residue chain is 1-deoxy-D-xylulose-5-phosphate synthase (638 aa).

Thiamine diphosphate-binding positions include H79 and 120–122 (AHS). D151 is a binding site for Mg(2+). Thiamine diphosphate-binding positions include 152-153 (GA), N180, Y289, and E371. Position 180 (N180) interacts with Mg(2+).

It belongs to the transketolase family. DXPS subfamily. In terms of assembly, homodimer. Requires Mg(2+) as cofactor. The cofactor is thiamine diphosphate.

The catalysed reaction is D-glyceraldehyde 3-phosphate + pyruvate + H(+) = 1-deoxy-D-xylulose 5-phosphate + CO2. The protein operates within metabolic intermediate biosynthesis; 1-deoxy-D-xylulose 5-phosphate biosynthesis; 1-deoxy-D-xylulose 5-phosphate from D-glyceraldehyde 3-phosphate and pyruvate: step 1/1. Functionally, catalyzes the acyloin condensation reaction between C atoms 2 and 3 of pyruvate and glyceraldehyde 3-phosphate to yield 1-deoxy-D-xylulose-5-phosphate (DXP). This is 1-deoxy-D-xylulose-5-phosphate synthase from Rhizobium johnstonii (strain DSM 114642 / LMG 32736 / 3841) (Rhizobium leguminosarum bv. viciae).